Reading from the N-terminus, the 636-residue chain is Threonine--tRNA ligase (636 aa).

Positions 1–63 constitute a TGS domain; the sequence is MSSISIALPD…KDDSRVEIIT (63 aa). The tract at residues 243–534 is catalytic; that stretch reads DHRRLGRELD…LIEHYAGNFP (292 aa). Residues cysteine 335, histidine 386, and histidine 511 each coordinate Zn(2+).

Belongs to the class-II aminoacyl-tRNA synthetase family. In terms of assembly, homodimer. It depends on Zn(2+) as a cofactor.

Its subcellular location is the cytoplasm. The enzyme catalyses tRNA(Thr) + L-threonine + ATP = L-threonyl-tRNA(Thr) + AMP + diphosphate + H(+). Catalyzes the attachment of threonine to tRNA(Thr) in a two-step reaction: L-threonine is first activated by ATP to form Thr-AMP and then transferred to the acceptor end of tRNA(Thr). Also edits incorrectly charged L-seryl-tRNA(Thr). The polypeptide is Threonine--tRNA ligase (Pelobacter propionicus (strain DSM 2379 / NBRC 103807 / OttBd1)).